The chain runs to 465 residues: Cysteine--tRNA ligase (465 aa).

Residue Cys27 participates in Zn(2+) binding. A 'HIGH' region motif is present at residues 29-39 (PTVYDEVHIGH). 3 residues coordinate Zn(2+): Cys204, His229, and Glu233. The short motif at 261-265 (KMSKS) is the 'KMSKS' region element. Lys264 is an ATP binding site.

It belongs to the class-I aminoacyl-tRNA synthetase family. Requires Zn(2+) as cofactor.

The protein resides in the cytoplasm. The catalysed reaction is tRNA(Cys) + L-cysteine + ATP = L-cysteinyl-tRNA(Cys) + AMP + diphosphate. This chain is Cysteine--tRNA ligase, found in Metallosphaera sedula (strain ATCC 51363 / DSM 5348 / JCM 9185 / NBRC 15509 / TH2).